The primary structure comprises 140 residues: MIYGVGTDIIQIARVQGVMERTNGRFAEKVLGPDELAKYHARKARSEKRGLAFLSTRFAAKEAFSKAIGLGMRWPMTWRAMELMNLPSGEPTPICHGELAAWLAERGLSVRVSVSDEHDFAVAFAIAERAGGAASQPTAL.

D8 and E62 together coordinate Mg(2+).

The protein belongs to the P-Pant transferase superfamily. AcpS family. It depends on Mg(2+) as a cofactor.

Its subcellular location is the cytoplasm. The enzyme catalyses apo-[ACP] + CoA = holo-[ACP] + adenosine 3',5'-bisphosphate + H(+). In terms of biological role, transfers the 4'-phosphopantetheine moiety from coenzyme A to a Ser of acyl-carrier-protein. The sequence is that of Holo-[acyl-carrier-protein] synthase from Cupriavidus necator (strain ATCC 17699 / DSM 428 / KCTC 22496 / NCIMB 10442 / H16 / Stanier 337) (Ralstonia eutropha).